A 437-amino-acid polypeptide reads, in one-letter code: Glucose-1-phosphate adenylyltransferase (437 aa).

Alpha-D-glucose 1-phosphate-binding positions include Y113, G179, E194–K195, and S212.

The protein belongs to the bacterial/plant glucose-1-phosphate adenylyltransferase family. As to quaternary structure, homotetramer.

The enzyme catalyses alpha-D-glucose 1-phosphate + ATP + H(+) = ADP-alpha-D-glucose + diphosphate. It functions in the pathway glycan biosynthesis; glycogen biosynthesis. Its function is as follows. Involved in the biosynthesis of ADP-glucose, a building block required for the elongation reactions to produce glycogen. Catalyzes the reaction between ATP and alpha-D-glucose 1-phosphate (G1P) to produce pyrophosphate and ADP-Glc. This Haemophilus influenzae (strain 86-028NP) protein is Glucose-1-phosphate adenylyltransferase.